The sequence spans 343 residues: 4-hydroxy-2-oxovalerate aldolase 2 (343 aa).

The region spanning 5–255 (ITIVDTTLRD…DTGVDLFPLI (251 aa)) is the Pyruvate carboxyltransferase domain. Residues 13–14 (RD), Ser-167, and His-194 each bind substrate. Asp-14 lines the Mn(2+) pocket. His-194 and His-196 together coordinate Mn(2+). Tyr-285 serves as a coordination point for substrate.

The protein belongs to the 4-hydroxy-2-oxovalerate aldolase family.

The catalysed reaction is (S)-4-hydroxy-2-oxopentanoate = acetaldehyde + pyruvate. The sequence is that of 4-hydroxy-2-oxovalerate aldolase 2 from Rhodococcus jostii (strain RHA1).